Reading from the N-terminus, the 90-residue chain is DNA-binding protein HU (90 aa).

Belongs to the bacterial histone-like protein family. As to quaternary structure, homodimer.

Functionally, histone-like DNA-binding protein which is capable of wrapping DNA to stabilize it, and thus to prevent its denaturation under extreme environmental conditions. In Pasteurella multocida (strain Pm70), this protein is DNA-binding protein HU (hup).